A 145-amino-acid chain; its full sequence is Small ribosomal subunit protein eS12A (145 aa).

Belongs to the eukaryotic ribosomal protein eS12 family. As to quaternary structure, component of the small ribosomal subunit (SSU). Mature yeast ribosomes consist of a small (40S) and a large (60S) subunit. The 40S small subunit contains 1 molecule of ribosomal RNA (18S rRNA) and at least 33 different proteins. The large 60S subunit contains 3 rRNA molecules (25S, 5.8S and 5S rRNA) and at least 46 different proteins.

The protein localises to the cytoplasm. Component of the ribosome, a large ribonucleoprotein complex responsible for the synthesis of proteins in the cell. The small ribosomal subunit (SSU) binds messenger RNAs (mRNAs) and translates the encoded message by selecting cognate aminoacyl-transfer RNA (tRNA) molecules. The large subunit (LSU) contains the ribosomal catalytic site termed the peptidyl transferase center (PTC), which catalyzes the formation of peptide bonds, thereby polymerizing the amino acids delivered by tRNAs into a polypeptide chain. The nascent polypeptides leave the ribosome through a tunnel in the LSU and interact with protein factors that function in enzymatic processing, targeting, and the membrane insertion of nascent chains at the exit of the ribosomal tunnel. This chain is Small ribosomal subunit protein eS12A (rps1201), found in Schizosaccharomyces pombe (strain 972 / ATCC 24843) (Fission yeast).